A 601-amino-acid polypeptide reads, in one-letter code: NADH-quinone oxidoreductase subunit C/D (601 aa).

An NADH dehydrogenase I subunit C region spans residues 1–191 (MKLTRDFPSN…DPFMLDAAKQ (191 aa)). Residues 215-601 (DYMFLNLGPN…IDFVMSDVDR (387 aa)) form an NADH dehydrogenase I subunit D region.

This sequence in the N-terminal section; belongs to the complex I 30 kDa subunit family. The protein in the C-terminal section; belongs to the complex I 49 kDa subunit family. As to quaternary structure, NDH-1 is composed of 13 different subunits. Subunits NuoB, CD, E, F, and G constitute the peripheral sector of the complex.

It is found in the cell inner membrane. The enzyme catalyses a quinone + NADH + 5 H(+)(in) = a quinol + NAD(+) + 4 H(+)(out). Its function is as follows. NDH-1 shuttles electrons from NADH, via FMN and iron-sulfur (Fe-S) centers, to quinones in the respiratory chain. The immediate electron acceptor for the enzyme in this species is believed to be ubiquinone. Couples the redox reaction to proton translocation (for every two electrons transferred, four hydrogen ions are translocated across the cytoplasmic membrane), and thus conserves the redox energy in a proton gradient. This chain is NADH-quinone oxidoreductase subunit C/D, found in Aeromonas salmonicida (strain A449).